The chain runs to 473 residues: LETM1 domain-containing protein mdm28, mitochondrial (473 aa).

The transit peptide at 1–73 directs the protein to the mitochondrion; that stretch reads MLRNRLFKTP…FYNIGSSRLY (73 aa). The Mitochondrial intermembrane segment spans residues 74–161; sequence STETPTPSKV…LTRTLKDIGR (88 aa). The helical transmembrane segment at 162–182 threads the bilayer; the sequence is LVPFSVFVVVPFAELLLPIAV. The Mitochondrial matrix portion of the chain corresponds to 183–473; that stretch reads KLFPNLLPST…ESNIPKNERK (291 aa). In terms of domain architecture, Letm1 RBD spans 205–398; the sequence is QLRKTRNEVS…LQDTLASIPD (194 aa). Residues 430–473 form a disordered region; it reads EEEAEHVAEHPDLAKKQTEENKATSKPAVSAKSPESNIPKNERK. Over residues 434–452 the composition is skewed to basic and acidic residues; the sequence is EHVAEHPDLAKKQTEENKA. Over residues 462 to 473 the composition is skewed to polar residues; it reads SPESNIPKNERK.

The protein localises to the mitochondrion inner membrane. In terms of biological role, involved in mitochondrial potassium homeostasis through the mitochondrial K(+)/H(+) exchange regulation. In Schizosaccharomyces pombe (strain 972 / ATCC 24843) (Fission yeast), this protein is LETM1 domain-containing protein mdm28, mitochondrial (mdm28).